A 722-amino-acid polypeptide reads, in one-letter code: Portal protein (722 aa).

Residues 402 to 426 are disordered; that stretch reads ASIDTSQPGFGQSNRAQSSTTEETR. Residues 404 to 422 show a composition bias toward polar residues; it reads IDTSQPGFGQSNRAQSSTT. Residues 448–469 are putative leucine zipper motif; sequence LEGYVNKLFNTVEGLKAANKDL. A compositionally biased stretch (basic and acidic residues) spans 658-683; the sequence is QREAEDLPDGHHGRRNDFHSPSSRRE. The disordered stretch occupies residues 658–722; the sequence is QREAEDLPDG…GEDDDGSQRD (65 aa). Over residues 684 to 696 the composition is skewed to basic residues; sequence RYSRRSGYKRHRW. Over residues 697-706 the composition is skewed to basic and acidic residues; that stretch reads NRESRRDYRR. Positions 713 to 722 are enriched in acidic residues; the sequence is GEDDDGSQRD.

It belongs to the herpesviridae portal protein family. As to quaternary structure, homododecamerizes. Interacts with terminase subunits TRM1 and TRM3.

The protein localises to the virion. The protein resides in the host nucleus. Forms a portal in the viral capsid through which viral DNA is translocated during DNA packaging. Assembles as a dodecamer at a single fivefold axe of the T=16 icosahedric capsid. Binds to the molecular motor that translocates the viral DNA, termed terminase. This is Portal protein (MDV018) from Gallid herpesvirus 2 (strain Chicken/Md5/ATCC VR-987) (GaHV-2).